A 328-amino-acid polypeptide reads, in one-letter code: Ferredoxin--NADP reductase 2 (328 aa).

Residues glutamate 37, glutamine 45, tyrosine 50, valine 90, phenylalanine 124, aspartate 285, and threonine 325 each coordinate FAD.

The protein belongs to the ferredoxin--NADP reductase type 2 family. Homodimer. Requires FAD as cofactor.

The catalysed reaction is 2 reduced [2Fe-2S]-[ferredoxin] + NADP(+) + H(+) = 2 oxidized [2Fe-2S]-[ferredoxin] + NADPH. This Latilactobacillus sakei subsp. sakei (strain 23K) (Lactobacillus sakei subsp. sakei) protein is Ferredoxin--NADP reductase 2.